The following is a 153-amino-acid chain: Histone H2B.10 (153 aa).

Basic and acidic residues-rich tracts occupy residues 1–28 (MAPKAEKKPAAKKPAEEEPAAEKAEKAL) and 36–53 (EKRLPAGKAEKSSGEGKK). The disordered stretch occupies residues 1–61 (MAPKAEKKPA…KKAGRKKAKK (61 aa)). 2 positions are modified to N6-acetyllysine: K7 and K37. Residue K149 forms a Glycyl lysine isopeptide (Lys-Gly) (interchain with G-Cter in ubiquitin) linkage.

It belongs to the histone H2B family. In terms of assembly, the nucleosome is a histone octamer containing two molecules each of H2A, H2B, H3 and H4 assembled in one H3-H4 heterotetramer and two H2A-H2B heterodimers. The octamer wraps approximately 147 bp of DNA. Post-translationally, can be acetylated to form H2BK6ac and H2BK33ac. Monoubiquitinated by BRE1 to form H2BK143ub1 and deubiquitinated by UBP26. Required for heterochromatic histone H3 di- and trimethylation at H3K4me. May give a specific tag for epigenetic transcriptional activation.

It is found in the nucleus. It localises to the chromosome. Core component of nucleosome. Nucleosomes wrap and compact DNA into chromatin, limiting DNA accessibility to the cellular machineries which require DNA as a template. Histones thereby play a central role in transcription regulation, DNA repair, DNA replication and chromosomal stability. DNA accessibility is regulated via a complex set of post-translational modifications of histones, also called histone code, and nucleosome remodeling. This Oryza sativa subsp. japonica (Rice) protein is Histone H2B.10 (H2B.10).